The chain runs to 348 residues: Mitogen-activated protein kinase 14B (348 aa).

The region spanning 25–309 is the Protein kinase domain; sequence YQNLSPVGSG…ASQALAHPYF (285 aa). ATP-binding positions include 31–39 and lysine 54; that span reads VGSGAYGSV. Aspartate 169 acts as the Proton acceptor in catalysis. The residue at position 181 (threonine 181) is a Phosphothreonine; by MAP2K3. Residues 181–183 carry the TXY motif; that stretch reads TGY. A Phosphotyrosine; by MAP2K3 modification is found at tyrosine 183.

Belongs to the protein kinase superfamily. CMGC Ser/Thr protein kinase family. MAP kinase subfamily. It depends on Mg(2+) as a cofactor. In terms of processing, dually phosphorylated on Thr-181 and Tyr-183, which activates the enzyme.

It localises to the cytoplasm. Its subcellular location is the nucleus. It carries out the reaction L-seryl-[protein] + ATP = O-phospho-L-seryl-[protein] + ADP + H(+). The enzyme catalyses L-threonyl-[protein] + ATP = O-phospho-L-threonyl-[protein] + ADP + H(+). Its activity is regulated as follows. Activated by threonine and tyrosine phosphorylation by the dual specificity kinase, MKK3. Functionally, serine/threonine kinase which acts as an essential component of the MAP kinase signal transduction pathway. Mapk14b is one of the four p38 MAPKs which play an important role in the cascades of cellular responses evoked by extracellular stimuli such as pro-inflammatory cytokines or physical stress leading to direct activation of transcription factors. Accordingly, p38 MAPKs phosphorylate a broad range of proteins and it has been estimated that they may have approximately 200 to 300 substrates each. Some of the targets are downstream kinases which are activated through phosphorylation and further phosphorylate additional targets. This chain is Mitogen-activated protein kinase 14B (mapk14b), found in Danio rerio (Zebrafish).